Here is a 122-residue protein sequence, read N- to C-terminus: Large ribosomal subunit protein uL14 (122 aa).

The protein belongs to the universal ribosomal protein uL14 family. In terms of assembly, part of the 50S ribosomal subunit. Forms a cluster with proteins L3 and L19. In the 70S ribosome, L14 and L19 interact and together make contacts with the 16S rRNA in bridges B5 and B8.

In terms of biological role, binds to 23S rRNA. Forms part of two intersubunit bridges in the 70S ribosome. The protein is Large ribosomal subunit protein uL14 of Shewanella sp. (strain ANA-3).